The primary structure comprises 153 residues: Transcriptional repressor NrdR (153 aa).

The segment at 1-20 (MKCPFCNSADTRVKNSRHSD) is disordered. A zinc finger spans residues 3-34 (CPFCNSADTRVKNSRHSDDNMSVRRRRLCEVC). The span at 11 to 20 (TRVKNSRHSD) shows a compositional bias: basic and acidic residues. The ATP-cone domain maps to 49–139 (IMVLKKDGRM…VYMDFSDADD (91 aa)).

It belongs to the NrdR family. Requires Zn(2+) as cofactor.

Functionally, negatively regulates transcription of bacterial ribonucleotide reductase nrd genes and operons by binding to NrdR-boxes. This Anaplasma phagocytophilum (strain HZ) protein is Transcriptional repressor NrdR.